A 139-amino-acid polypeptide reads, in one-letter code: Low molecular weight protein-tyrosine-phosphatase PtpB (139 aa).

Residue cysteine 7 is the Nucleophile of the active site. Arginine 13 is a catalytic residue. Aspartate 111 (proton donor) is an active-site residue.

Belongs to the low molecular weight phosphotyrosine protein phosphatase family.

It catalyses the reaction O-phospho-L-tyrosyl-[protein] + H2O = L-tyrosyl-[protein] + phosphate. Inhibited by N-ethylmaleimide and sodium orthovanadate. Dephosphorylates the phosphotyrosine-containing proteins. The protein is Low molecular weight protein-tyrosine-phosphatase PtpB (ptpB) of Staphylococcus aureus.